Reading from the N-terminus, the 345-residue chain is Ferrochelatase (345 aa).

Residues histidine 192 and glutamate 295 each contribute to the Fe cation site.

This sequence belongs to the ferrochelatase family.

The protein localises to the cytoplasm. It catalyses the reaction heme b + 2 H(+) = protoporphyrin IX + Fe(2+). The protein operates within porphyrin-containing compound metabolism; protoheme biosynthesis; protoheme from protoporphyrin-IX: step 1/1. In terms of biological role, catalyzes the ferrous insertion into protoporphyrin IX. The sequence is that of Ferrochelatase from Opitutus terrae (strain DSM 11246 / JCM 15787 / PB90-1).